The following is a 183-amino-acid chain: ATP synthase subunit delta (183 aa).

This sequence belongs to the ATPase delta chain family. In terms of assembly, F-type ATPases have 2 components, F(1) - the catalytic core - and F(0) - the membrane proton channel. F(1) has five subunits: alpha(3), beta(3), gamma(1), delta(1), epsilon(1). F(0) has three main subunits: a(1), b(2) and c(10-14). The alpha and beta chains form an alternating ring which encloses part of the gamma chain. F(1) is attached to F(0) by a central stalk formed by the gamma and epsilon chains, while a peripheral stalk is formed by the delta and b chains.

It is found in the cell inner membrane. F(1)F(0) ATP synthase produces ATP from ADP in the presence of a proton or sodium gradient. F-type ATPases consist of two structural domains, F(1) containing the extramembraneous catalytic core and F(0) containing the membrane proton channel, linked together by a central stalk and a peripheral stalk. During catalysis, ATP synthesis in the catalytic domain of F(1) is coupled via a rotary mechanism of the central stalk subunits to proton translocation. Functionally, this protein is part of the stalk that links CF(0) to CF(1). It either transmits conformational changes from CF(0) to CF(1) or is implicated in proton conduction. The chain is ATP synthase subunit delta from Desulforapulum autotrophicum (strain ATCC 43914 / DSM 3382 / VKM B-1955 / HRM2) (Desulfobacterium autotrophicum).